We begin with the raw amino-acid sequence, 166 residues long: Large ribosomal subunit protein uL10 (166 aa).

The protein belongs to the universal ribosomal protein uL10 family. Part of the ribosomal stalk of the 50S ribosomal subunit. The N-terminus interacts with L11 and the large rRNA to form the base of the stalk. The C-terminus forms an elongated spine to which L12 dimers bind in a sequential fashion forming a multimeric L10(L12)X complex.

Its function is as follows. Forms part of the ribosomal stalk, playing a central role in the interaction of the ribosome with GTP-bound translation factors. The polypeptide is Large ribosomal subunit protein uL10 (Neisseria gonorrhoeae (strain ATCC 700825 / FA 1090)).